We begin with the raw amino-acid sequence, 530 residues long: Membrane-associated transporter protein (530 aa).

Over 1-46 (MGSNSGQAGRHIYKSLADDGPFDSVEPPKRPTSRLIMHSMAMFGRE) the chain is Cytoplasmic. A helical membrane pass occupies residues 47–67 (FCYAVEAAYVTPVLLSVGLPS). Position 68 (Ser68) is a topological domain, extracellular. The helical transmembrane segment at 69–89 (LYSIVWFLSPILGFLLQPVVG) threads the bilayer. At 90–110 (SASDHCRSRWGRRRPYILTLG) the chain is on the cytoplasmic side. A helical membrane pass occupies residues 111-131 (VMMLVGMALYLNGATVVAALI). Residues 132–138 (ANPRRKL) are Extracellular-facing. Residues 139–159 (VWAISVTMIGVVLFDFAADFI) traverse the membrane as a helical segment. At 160-184 (DGPIKAYLFDVCSHQDKEKGLHYHA) the chain is on the cytoplasmic side. Residues 185–205 (LFTGFGGALGYLLGAIDWAHL) form a helical membrane-spanning segment. Over 206–216 (ELGRLLGTEFQ) the chain is Extracellular. Residues 217-237 (VMFFFSALVLTLCFTVHLCSI) form a helical membrane-spanning segment. Topologically, residues 238–318 (SEAPLTEVAK…ALVNMPPHYR (81 aa)) are cytoplasmic. The chain crosses the membrane as a helical span at residues 319–339 (YLCISHLIGWTAFLSNMLFFT). At 340-366 (DFMGQIVYRGDPYSAHNSTEFLIYERG) the chain is on the extracellular side. The N-linked (GlcNAc...) asparagine glycan is linked to Asn356. A helical membrane pass occupies residues 367 to 387 (VEVGCWGLCINSVFSSLYSYF). The Cytoplasmic portion of the chain corresponds to 388-398 (QKVLVSYIGLK). The helical transmembrane segment at 399–419 (GLYFTGYLLFGLGTGFIGLFP) threads the bilayer. Residues 420–425 (NVYSTL) lie on the Extracellular side of the membrane. Residues 426–446 (VLCSLFGVMSSTLYTVPFNLI) traverse the membrane as a helical segment. At 447–477 (TEYHREEEKERQQAPGGDPDNSVRGKGMDCA) the chain is on the cytoplasmic side. The chain crosses the membrane as a helical span at residues 478–498 (TLTCMVQLAQILVGGGLGFLV). Topologically, residues 499–504 (NTAGTV) are extracellular. The chain crosses the membrane as a helical span at residues 505–525 (VVVVITASAVALIGCCFVALF). Residues 526-530 (VRYVD) lie on the Cytoplasmic side of the membrane.

It belongs to the glycoside-pentoside-hexuronide (GPH) cation symporter transporter (TC 2.A.2) family. In terms of assembly, interacts with TYRP1. As to expression, expressed in mature melanocytes.

It is found in the melanosome membrane. The enzyme catalyses sucrose(out) + H(+)(out) = sucrose(in) + H(+)(in). The catalysed reaction is D-glucose(out) + H(+)(out) = D-glucose(in) + H(+)(in). Functionally, proton-associated glucose and sucrose transporter. May be able to transport also fructose. Expressed at a late melanosome maturation stage where functions as proton/glucose exporter which increase lumenal pH by decreasing glycolysis. Regulates melanogenesis by maintaining melanosome neutralization that is initially initiated by transient OCA2 and required for a proper function of the tyrosinase TYR. This is Membrane-associated transporter protein from Homo sapiens (Human).